We begin with the raw amino-acid sequence, 239 residues long: Pyrroloquinoline-quinone synthase (239 aa).

Belongs to the PqqC family.

The enzyme catalyses 6-(2-amino-2-carboxyethyl)-7,8-dioxo-1,2,3,4,7,8-hexahydroquinoline-2,4-dicarboxylate + 3 O2 = pyrroloquinoline quinone + 2 H2O2 + 2 H2O + H(+). The protein operates within cofactor biosynthesis; pyrroloquinoline quinone biosynthesis. In terms of biological role, ring cyclization and eight-electron oxidation of 3a-(2-amino-2-carboxyethyl)-4,5-dioxo-4,5,6,7,8,9-hexahydroquinoline-7,9-dicarboxylic-acid to PQQ. The chain is Pyrroloquinoline-quinone synthase from Gluconobacter oxydans (strain 621H) (Gluconobacter suboxydans).